A 323-amino-acid chain; its full sequence is NADH-cytochrome b5 reductase 2 (323 aa).

Residues 32–48 (LAPIYVAVGLTGLGVGL) form a helical membrane-spanning segment. The FAD-binding FR-type domain occupies 72–177 (QGWVDLKLAQ…KGPIPKYPWE (106 aa)). An FAD-binding site is contributed by 180–215 (KHKHICLIAGGTGITPMYQLARKIFKDPEDQTKVTL).

The protein belongs to the flavoprotein pyridine nucleotide cytochrome reductase family. FAD is required as a cofactor.

Its subcellular location is the mitochondrion outer membrane. It carries out the reaction 2 Fe(III)-[cytochrome b5] + NADH = 2 Fe(II)-[cytochrome b5] + NAD(+) + H(+). Functionally, may mediate the reduction of outer membrane cytochrome b5. The polypeptide is NADH-cytochrome b5 reductase 2 (mcr1) (Neosartorya fischeri (strain ATCC 1020 / DSM 3700 / CBS 544.65 / FGSC A1164 / JCM 1740 / NRRL 181 / WB 181) (Aspergillus fischerianus)).